The primary structure comprises 282 residues: D-alanine aminotransferase (282 aa).

Tyrosine 32 contacts substrate. Residue arginine 51 coordinates pyridoxal 5'-phosphate. Residues arginine 99 and histidine 101 each coordinate substrate. Residue lysine 146 is the Proton acceptor of the active site. At lysine 146 the chain carries N6-(pyridoxal phosphate)lysine. Residue glutamate 178 coordinates pyridoxal 5'-phosphate.

Belongs to the class-IV pyridoxal-phosphate-dependent aminotransferase family. Homodimer. The cofactor is pyridoxal 5'-phosphate.

It carries out the reaction D-alanine + 2-oxoglutarate = D-glutamate + pyruvate. In terms of biological role, acts on the D-isomers of alanine, leucine, aspartate, glutamate, aminobutyrate, norvaline and asparagine. The enzyme transfers an amino group from a substrate D-amino acid to the pyridoxal phosphate cofactor to form pyridoxamine and an alpha-keto acid in the first half-reaction. The second half-reaction is the reverse of the first, transferring the amino group from the pyridoxamine to a second alpha-keto acid to form the product D-amino acid via a ping-pong mechanism. This is an important process in the formation of D-alanine and D-glutamate, which are essential bacterial cell wall components. The protein is D-alanine aminotransferase (dat) of Staphylococcus aureus (strain COL).